A 322-amino-acid polypeptide reads, in one-letter code: MTKNATSASVITRLSPAKINLFLHITGKRADGYHNLQTVFRLLDWGDYLHFSVADELIITIDSVADNSAVDNSSLCGQLLTLSGADTITSSIEDNLIFKAANALLASAINSNSLPKNLPKVSVRLDKHLPMGAGLGGGSSNAATTLLVLNKIWQINFDQDTLIKIGASIGADVPIFIFGQDAIAMGIGEELTAIDLPEQQYLVLTPKAHVNTAELFAHSKLQRDIAPLSIKTIQNHSNDYVQHLNTPYQNVFTPVVTNLAPAVDEALRYLQELETQALSTARMTGSGSAVFLPLDAGVISDKARLAKWIEEAPCPAYLVRNL.

The active site involves K18. An ATP-binding site is contributed by P130–S140. Residue D172 is part of the active site.

It belongs to the GHMP kinase family. IspE subfamily.

The catalysed reaction is 4-CDP-2-C-methyl-D-erythritol + ATP = 4-CDP-2-C-methyl-D-erythritol 2-phosphate + ADP + H(+). The protein operates within isoprenoid biosynthesis; isopentenyl diphosphate biosynthesis via DXP pathway; isopentenyl diphosphate from 1-deoxy-D-xylulose 5-phosphate: step 3/6. In terms of biological role, catalyzes the phosphorylation of the position 2 hydroxy group of 4-diphosphocytidyl-2C-methyl-D-erythritol. The chain is 4-diphosphocytidyl-2-C-methyl-D-erythritol kinase from Psychrobacter cryohalolentis (strain ATCC BAA-1226 / DSM 17306 / VKM B-2378 / K5).